The primary structure comprises 217 residues: NAD(P)H-hydrate epimerase (217 aa).

The region spanning 1–217 (MRAIENAAMA…VAVADIGLSS (217 aa)) is the YjeF N-terminal domain. 48-52 (NNGGD) contacts (6S)-NADPHX. 2 residues coordinate K(+): N49 and D127. Residues 131–137 (GIGQTRP) and D165 each bind (6S)-NADPHX. K(+) is bound at residue T168.

Belongs to the NnrE/AIBP family. K(+) serves as cofactor.

The enzyme catalyses (6R)-NADHX = (6S)-NADHX. It carries out the reaction (6R)-NADPHX = (6S)-NADPHX. Catalyzes the epimerization of the S- and R-forms of NAD(P)HX, a damaged form of NAD(P)H that is a result of enzymatic or heat-dependent hydration. This is a prerequisite for the S-specific NAD(P)H-hydrate dehydratase to allow the repair of both epimers of NAD(P)HX. The chain is NAD(P)H-hydrate epimerase from Cereibacter sphaeroides (strain KD131 / KCTC 12085) (Rhodobacter sphaeroides).